The following is a 100-amino-acid chain: Urease subunit gamma (100 aa).

The protein belongs to the urease gamma subunit family. In terms of assembly, heterotrimer of UreA (gamma), UreB (beta) and UreC (alpha) subunits. Three heterotrimers associate to form the active enzyme.

The protein localises to the cytoplasm. It carries out the reaction urea + 2 H2O + H(+) = hydrogencarbonate + 2 NH4(+). It participates in nitrogen metabolism; urea degradation; CO(2) and NH(3) from urea (urease route): step 1/1. The sequence is that of Urease subunit gamma from Paraburkholderia phymatum (strain DSM 17167 / CIP 108236 / LMG 21445 / STM815) (Burkholderia phymatum).